Consider the following 291-residue polypeptide: tRNA dimethylallyltransferase (291 aa).

17-24 provides a ligand contact to ATP; sequence GPTASGKS. 19 to 24 contributes to the substrate binding site; the sequence is TASGKS.

Belongs to the IPP transferase family. As to quaternary structure, monomer. Mg(2+) serves as cofactor.

The catalysed reaction is adenosine(37) in tRNA + dimethylallyl diphosphate = N(6)-dimethylallyladenosine(37) in tRNA + diphosphate. Its function is as follows. Catalyzes the transfer of a dimethylallyl group onto the adenine at position 37 in tRNAs that read codons beginning with uridine, leading to the formation of N6-(dimethylallyl)adenosine (i(6)A). This is tRNA dimethylallyltransferase from Cereibacter sphaeroides (strain ATCC 17025 / ATH 2.4.3) (Rhodobacter sphaeroides).